Reading from the N-terminus, the 529-residue chain is Cytochrome P450 monooxygenase patI (529 aa).

Over 1–8 (MDFTQVPP) the chain is Cytoplasmic. The chain crosses the membrane as a helical span at residues 9-25 (SYILGVLLSSTSILFCL). The Lumenal segment spans residues 26 to 529 (KYLLRSGYRP…EAQGVFSRFD (504 aa)). 2 N-linked (GlcNAc...) asparagine glycosylation sites follow: asparagine 81 and asparagine 383. Residue cysteine 449 coordinates heme.

This sequence belongs to the cytochrome P450 family. The cofactor is heme.

It localises to the endoplasmic reticulum membrane. The catalysed reaction is 3-hydroxybenzyl alcohol + reduced [NADPH--hemoprotein reductase] + O2 = gentisyl alcohol + oxidized [NADPH--hemoprotein reductase] + H2O + H(+). It functions in the pathway mycotoxin biosynthesis; patulin biosynthesis. In terms of biological role, cytochrome P450 monooxygenase; part of the gene cluster that mediates the biosynthesis of patulin, an acetate-derived tetraketide mycotoxin produced by several fungal species that shows antimicrobial properties against several bacteria. PatI catalyzes the conversion of m-hydroxybenzyl alcohol into gentisyl alcohol. The pathway begins with the synthesis of 6-methylsalicylic acid by the polyketide synthase (PKS) patK via condensation of acetate and malonate units. The 6-methylsalicylic acid decarboxylase patG then catalyzes the decarboxylation of 6-methylsalicylic acid to yield m-cresol (also known as 3-methylphenol). These first reactions occur in the cytosol. The intermediate m-cresol is then transported into the endoplasmic reticulum where the cytochrome P450 monooxygenase patH converts it to m-hydroxybenzyl alcohol, which is further converted to gentisyl alcohol by the cytochrome P450 monooxygenase patI. The oxidoreductases patJ and patO further convert gentisyl alcohol to isoepoxydon in the vacuole. PatN catalyzes then the transformation of isoepoxydon into phyllostine. The cluster protein patF is responsible for the conversion from phyllostine to neopatulin whereas the alcohol dehydrogenase patD converts neopatulin to E-ascladiol. The steps between isoepoxydon and E-ascladiol occur in the cytosol, and E-ascladiol is probably secreted to the extracellular space by one of the cluster-specific transporters patC or patM. Finally, the secreted patulin synthase patE catalyzes the conversion of E-ascladiol to patulin. The polypeptide is Cytochrome P450 monooxygenase patI (Aspergillus clavatus (strain ATCC 1007 / CBS 513.65 / DSM 816 / NCTC 3887 / NRRL 1 / QM 1276 / 107)).